The following is a 937-amino-acid chain: ABC transporter A family member 4 (937 aa).

A run of 7 helical transmembrane segments spans residues 34-54 (LIVI…LFDT), 340-360 (IASV…FPVI), 394-414 (FLAI…AIGL), 423-443 (SIQF…AFLV), 455-475 (VAAY…FQFM), 478-498 (GLSF…FSLY), and 528-548 (AMDE…IAAY). The ABC transporter domain maps to 618–852 (DKLKKVYPGR…YGGSYVLTMT (235 aa)). Residue 653-660 (GPNGAGKT) participates in ATP binding.

It belongs to the ABC transporter superfamily. ABCA family. CPR flippase (TC 3.A.1.211) subfamily.

It is found in the membrane. The sequence is that of ABC transporter A family member 4 (ABCA4) from Arabidopsis thaliana (Mouse-ear cress).